The sequence spans 419 residues: DNA ligase (419 aa).

The interval 1–120 is NTD; that stretch reads MLNQFPGQLS…ARQKRGAHTN (120 aa). Residues 121 to 317 are AD domain; that stretch reads RGMIPPMLVK…NYHSPHLAKL (197 aa). The active-site N6-AMP-lysine intermediate is lysine 151. Residues 318–419 form an OB domain region; that stretch reads KPLLDAEFIL…REPINVLEII (102 aa).

The protein belongs to the ATP-dependent DNA ligase family.

The protein resides in the virion. It catalyses the reaction ATP + (deoxyribonucleotide)n-3'-hydroxyl + 5'-phospho-(deoxyribonucleotide)m = (deoxyribonucleotide)n+m + AMP + diphosphate.. Its function is as follows. Very low-fidelity DNA ligase that seals nicks in double-stranded DNA during DNA repair. Together with the viral repair DNA polymerase X, fills the single nucleotide gaps generated by the AP endonuclease. It is not essential for viral replication and recombination. Displays a very low adenylation activity towards DNA with 3'-dideoxy- or 3'-amino-terminated nicks compared to regular nick DNA. The polypeptide is DNA ligase (Ornithodoros (relapsing fever ticks)).